Here is a 472-residue protein sequence, read N- to C-terminus: Zinc finger CCCH domain-containing protein 59 (472 aa).

The segment at 87 to 139 (YKSPEGNRPRQNAANGSAKPQVIGTGHRVSNQPRKNAVYGPRSSSLSDTRGCG) is disordered. Residues 145-172 (SPKKSVCNFWKDGNCKKGEKCQFLHSWS) form a C3H1-type zinc finger. WD repeat units follow at residues 185–226 (GHKN…RSIN), 261–301 (HLEG…SDPF), 310–347 (HHSGEVTCFVVGGEVLYSGSVDKTIKVWDLNTLQCRMT), 350–387 (QHIGTVTSLLCWDKCLISSSLDGTIKLWACSENESLKV), and 436–472 (FSTQTICTLTIGPGGLLFSGDKSGNLRVWSLASGTKV).

The chain is Zinc finger CCCH domain-containing protein 59 (ZFWD3) from Arabidopsis thaliana (Mouse-ear cress).